Here is a 1001-residue protein sequence, read N- to C-terminus: uncharacterized protein (1001 aa).

The segment covering Lys939–Ser948 has biased composition (basic and acidic residues). Residues Lys939–Asn1001 form a disordered region. Residues Ser948 and Ser950 each carry the phosphoserine modification.

This is an uncharacterized protein from Schizosaccharomyces pombe (strain 972 / ATCC 24843) (Fission yeast).